The following is a 307-amino-acid chain: Formate hydrogenlyase subunit 4 (307 aa).

Topologically, residues 1–2 are periplasmic; the sequence is MS. The chain crosses the membrane as a helical span at residues 3–23; sequence VLYPLIQALVLFAVAPLLSGI. Residues 24–67 lie on the Cytoplasmic side of the membrane; it reads TRVARARLHNRRGPGVLQEYRDIIKLLGRQSVGPDASGWVFRLT. A helical transmembrane segment spans residues 68–88; that stretch reads PYVMVGVMLTIATALPVVTVG. Over 89–93 the chain is Periplasmic; the sequence is SPLPQ. Residues 94 to 114 traverse the membrane as a helical segment; sequence LGDLITLLYLFAIARFFFAIS. The Cytoplasmic portion of the chain corresponds to 115 to 131; the sequence is GLDTGSPFTAIGASREA. A helical membrane pass occupies residues 132–152; the sequence is MLGVLVEPMLLLGLWVAAQVA. The Periplasmic portion of the chain corresponds to 153–167; that stretch reads GSTNISNITDTVYHW. The helical transmembrane segment at 168 to 188 threads the bilayer; sequence PLSQSIPLVLALCACAFATFI. Residues 189-221 are Cytoplasmic-facing; it reads EMGKLPFDLAEAEQELQEGPLSEYSGSGFGVMK. A helical membrane pass occupies residues 222–242; sequence WGISLKQLVVLQMFVGVFIPW. Topologically, residues 243–253 are periplasmic; it reads GQMETFTAGGL. A helical transmembrane segment spans residues 254 to 274; the sequence is LLALVIAIVKLVVGVLVIALF. Topologically, residues 275–284 are cytoplasmic; the sequence is ENSMARLRLD. Residues 285 to 305 form a helical membrane-spanning segment; sequence ITPRITWAGFGFAFLAFVSLL. At 306–307 the chain is on the periplasmic side; that stretch reads AA.

This sequence belongs to the complex I subunit 1 family. In terms of assembly, FHL comprises of a formate dehydrogenase, unidentified electron carriers and a hydrogenase (isoenzyme 3). In this non-energy conserving pathway molecular hydrogen and carbodioxide from formate are released.

The protein localises to the cell inner membrane. The sequence is that of Formate hydrogenlyase subunit 4 (hycD) from Escherichia coli (strain K12).